The sequence spans 391 residues: Succinate--CoA ligase [ADP-forming] subunit beta (391 aa).

An ATP-grasp domain is found at 9 to 248; the sequence is KDILRKFGVA…ITEEDPFEVE (240 aa). ATP is bound by residues Lys-50, 57 to 59, Glu-103, Met-106, and Glu-111; that span reads GRG. Positions 203 and 217 each coordinate Mg(2+). Substrate-binding positions include Asn-268 and 325-327; that span reads GIV.

The protein belongs to the succinate/malate CoA ligase beta subunit family. In terms of assembly, heterotetramer of two alpha and two beta subunits. Mg(2+) is required as a cofactor.

The enzyme catalyses succinate + ATP + CoA = succinyl-CoA + ADP + phosphate. It catalyses the reaction GTP + succinate + CoA = succinyl-CoA + GDP + phosphate. It participates in carbohydrate metabolism; tricarboxylic acid cycle; succinate from succinyl-CoA (ligase route): step 1/1. Its function is as follows. Succinyl-CoA synthetase functions in the citric acid cycle (TCA), coupling the hydrolysis of succinyl-CoA to the synthesis of either ATP or GTP and thus represents the only step of substrate-level phosphorylation in the TCA. The beta subunit provides nucleotide specificity of the enzyme and binds the substrate succinate, while the binding sites for coenzyme A and phosphate are found in the alpha subunit. The polypeptide is Succinate--CoA ligase [ADP-forming] subunit beta (Chlorobium phaeovibrioides (strain DSM 265 / 1930) (Prosthecochloris vibrioformis (strain DSM 265))).